The primary structure comprises 201 residues: Molybdenum cofactor guanylyltransferase (201 aa).

Residues 14 to 16 (LAG), Lys-31, and Asp-104 contribute to the GTP site. Mg(2+) is bound at residue Asp-104.

It belongs to the MobA family. As to quaternary structure, monomer. The cofactor is Mg(2+).

It localises to the cytoplasm. It carries out the reaction Mo-molybdopterin + GTP + H(+) = Mo-molybdopterin guanine dinucleotide + diphosphate. In terms of biological role, transfers a GMP moiety from GTP to Mo-molybdopterin (Mo-MPT) cofactor (Moco or molybdenum cofactor) to form Mo-molybdopterin guanine dinucleotide (Mo-MGD) cofactor. The protein is Molybdenum cofactor guanylyltransferase of Helicobacter pylori (strain G27).